The primary structure comprises 170 residues: MAEEHRCQTPESNRLCVNNCGFLGSSATMNLCSNCYGDLCLKQQQQSSSIKSTVESSLSVSPPSSSSSEISSPIIPPLLKNPSVKLEVPEKKAVISLPTTEQNQQQRPNRCTTCRKRVGLTGFKCRCGTMFCGVHRYPEIHGCSYDFKSAGREEIAKANPLVKAAKLQKI.

Residues 10–44 form an A20-type zinc finger; the sequence is PESNRLCVNNCGFLGSSATMNLCSNCYGDLCLKQQ. The Zn(2+) site is built by cysteine 16, cysteine 20, cysteine 32, and cysteine 35. The tract at residues 53–76 is disordered; that stretch reads TVESSLSVSPPSSSSSEISSPIIP. The AN1-type zinc-finger motif lies at 105-151; it reads QQRPNRCTTCRKRVGLTGFKCRCGTMFCGVHRYPEIHGCSYDFKSAG. 8 residues coordinate Zn(2+): cysteine 111, cysteine 114, cysteine 125, cysteine 127, cysteine 132, histidine 135, histidine 141, and cysteine 143.

Functionally, may be involved in environmental stress response. The protein is Zinc finger A20 and AN1 domain-containing stress-associated protein 6 (SAP6) of Arabidopsis thaliana (Mouse-ear cress).